Here is a 142-residue protein sequence, read N- to C-terminus: Large ribosomal subunit protein uL11 (142 aa).

A N,N,N-trimethylalanine modification is found at alanine 2. N6,N6,N6-trimethyllysine occurs at positions 4 and 40.

Belongs to the universal ribosomal protein uL11 family. In terms of assembly, part of the ribosomal stalk of the 50S ribosomal subunit. Interacts with L10 and the large rRNA to form the base of the stalk. L10 forms an elongated spine to which L12 dimers bind in a sequential fashion forming a multimeric L10(L12)X complex. Post-translationally, one or more lysine residues are methylated.

In terms of biological role, forms part of the ribosomal stalk which helps the ribosome interact with GTP-bound translation factors. This is Large ribosomal subunit protein uL11 from Shigella flexneri.